A 362-amino-acid chain; its full sequence is Mitochondrial distribution and morphology protein 12 (362 aa).

The region spanning 1–361 (MSFDINWSQL…WPSWLCFDMS (361 aa)) is the SMP-LTD domain. Disordered stretches follow at residues 65–141 (DFYE…AATP) and 170–207 (TPSG…SKRG). Polar residues-rich tracts occupy residues 106–119 (VTLS…TQFA) and 170–187 (TPSG…MRTG). Over residues 192 to 201 (PISNTPISSS) the composition is skewed to low complexity.

This sequence belongs to the MDM12 family. In terms of assembly, component of the ER-mitochondria encounter structure (ERMES) or MDM complex, composed of MMM1, MDM10, MDM12 and MDM34. An MMM1 homodimer associates with one molecule of MDM12 on each side in a pairwise head-to-tail manner, and the SMP-LTD domains of MMM1 and MDM12 generate a continuous hydrophobic tunnel for phospholipid trafficking.

It localises to the mitochondrion outer membrane. It is found in the endoplasmic reticulum membrane. Functionally, component of the ERMES/MDM complex, which serves as a molecular tether to connect the endoplasmic reticulum (ER) and mitochondria. Components of this complex are involved in the control of mitochondrial shape and protein biogenesis, and function in nonvesicular lipid trafficking between the ER and mitochondria. MDM12 is required for the interaction of the ER-resident membrane protein MMM1 and the outer mitochondrial membrane-resident beta-barrel protein MDM10. The MDM12-MMM1 subcomplex functions in the major beta-barrel assembly pathway that is responsible for biogenesis of all mitochondrial outer membrane beta-barrel proteins, and acts in a late step after the SAM complex. The MDM10-MDM12-MMM1 subcomplex further acts in the TOM40-specific pathway after the action of the MDM12-MMM1 complex. Essential for establishing and maintaining the structure of mitochondria and maintenance of mtDNA nucleoids. The protein is Mitochondrial distribution and morphology protein 12 of Meyerozyma guilliermondii (strain ATCC 6260 / CBS 566 / DSM 6381 / JCM 1539 / NBRC 10279 / NRRL Y-324) (Yeast).